The chain runs to 239 residues: Pyridoxal 5'-phosphate synthase subunit PdxS (239 aa).

Residue D21 participates in D-ribose 5-phosphate binding. K78 functions as the Schiff-base intermediate with D-ribose 5-phosphate in the catalytic mechanism. G150 is a D-ribose 5-phosphate binding site. D-glyceraldehyde 3-phosphate is bound at residue R162. Residues G211 and G232 to S233 each bind D-ribose 5-phosphate.

It belongs to the PdxS/SNZ family. As to quaternary structure, in the presence of PdxT, forms a dodecamer of heterodimers.

The enzyme catalyses aldehydo-D-ribose 5-phosphate + D-glyceraldehyde 3-phosphate + L-glutamine = pyridoxal 5'-phosphate + L-glutamate + phosphate + 3 H2O + H(+). Its pathway is cofactor biosynthesis; pyridoxal 5'-phosphate biosynthesis. In terms of biological role, catalyzes the formation of pyridoxal 5'-phosphate from ribose 5-phosphate (RBP), glyceraldehyde 3-phosphate (G3P) and ammonia. The ammonia is provided by the PdxT subunit. Can also use ribulose 5-phosphate and dihydroxyacetone phosphate as substrates, resulting from enzyme-catalyzed isomerization of RBP and G3P, respectively. This Francisella tularensis protein is Pyridoxal 5'-phosphate synthase subunit PdxS.